The chain runs to 229 residues: Potassium/proton antiporter CemA (229 aa).

Helical transmembrane passes span 7-27, 114-134, 154-174, and 189-209; these read LIPL…SLSF, IICF…LVIL, ILLL…ELMI, and IISG…KYWI.

The protein belongs to the CemA family.

It is found in the plastid. The protein resides in the chloroplast inner membrane. The catalysed reaction is K(+)(in) + H(+)(out) = K(+)(out) + H(+)(in). Its function is as follows. Contributes to K(+)/H(+) antiport activity by supporting proton efflux to control proton extrusion and homeostasis in chloroplasts in a light-dependent manner to modulate photosynthesis. Prevents excessive induction of non-photochemical quenching (NPQ) under continuous-light conditions. Indirectly promotes efficient inorganic carbon uptake into chloroplasts. The polypeptide is Potassium/proton antiporter CemA (Fagus sylvatica (Beechnut)).